Consider the following 313-residue polypeptide: Probable myosin light chain kinase DDB_G0292624 (313 aa).

The Protein kinase domain maps to 6 to 264 (YELHKEIGKG…AKQALEHPWI (259 aa)). Residues 12-20 (IGKGAFSVV) and K35 each bind ATP. D125 acts as the Proton acceptor in catalysis.

This sequence belongs to the protein kinase superfamily. CAMK Ser/Thr protein kinase family. CaMK subfamily.

The enzyme catalyses L-seryl-[myosin light chain] + ATP = O-phospho-L-seryl-[myosin light chain] + ADP + H(+). It catalyses the reaction L-threonyl-[myosin light chain] + ATP = O-phospho-L-threonyl-[myosin light chain] + ADP + H(+). Its activity is regulated as follows. Does not have a calmodulin-binding domain. Its function is as follows. May phosphorylate a specific serine in the N-terminus of a myosin light chain. This chain is Probable myosin light chain kinase DDB_G0292624, found in Dictyostelium discoideum (Social amoeba).